The following is a 229-amino-acid chain: Tubulin-specific chaperone B (229 aa).

The region spanning 170-212 (GATKFKEGVWVGVKYDEPVGKNDGSVAGVRYFDCDPKYGGFVR) is the CAP-Gly domain.

The protein belongs to the TBCB family. In terms of assembly, supercomplex made of cofactors A to E. Cofactors A and D function by capturing and stabilizing tubulin in a quasi-native conformation. Cofactor E binds to the cofactor D-tubulin complex; interaction with cofactor C then causes the release of tubulin polypeptides that are committed to the native state.

It localises to the cytoplasm. It is found in the cytoskeleton. Functionally, binds to alpha-tubulin folding intermediates after their interaction with cytosolic chaperonin in the pathway leading from newly synthesized tubulin to properly folded heterodimer. This Caenorhabditis elegans protein is Tubulin-specific chaperone B.